The following is a 205-amino-acid chain: Small ribosomal subunit protein uS4 (205 aa).

Residues 1–44 (MSKRHSQKYKIDRRMGENLWGRPKSPVNSRSYGPGQHGQRRKTK) form a disordered region. In terms of domain architecture, S4 RNA-binding spans 94-173 (SRLDAIVYRC…LPEYIDLDAK (80 aa)).

The protein belongs to the universal ribosomal protein uS4 family. As to quaternary structure, part of the 30S ribosomal subunit. Contacts protein S5. The interaction surface between S4 and S5 is involved in control of translational fidelity.

Its function is as follows. One of the primary rRNA binding proteins, it binds directly to 16S rRNA where it nucleates assembly of the body of the 30S subunit. Functionally, with S5 and S12 plays an important role in translational accuracy. This is Small ribosomal subunit protein uS4 from Maricaulis maris (strain MCS10) (Caulobacter maris).